A 1429-amino-acid chain; its full sequence is Nitric oxide synthase 1 (1429 aa).

An interaction with NOSIP region spans residues 1-200; it reads MEEHTFGVQQ…LQDSGEQDEL (200 aa). Residues 17–99 enclose the PDZ domain; it reads SVRLFKRKVG…ETHVVLILRG (83 aa). Disordered regions lie at residues 114–174 and 271–298; these read DGTP…SVSQ and NNPYSENEQSPASGKQSPTKNGSPSRCP. The segment at 163–240 is interaction with DYNLL1/PIN; the sequence is QGRGQGAGSV…TGIQVDRDLD (78 aa). Polar residues predominate over residues 272–294; the sequence is NPYSENEQSPASGKQSPTKNGSP. Position 280 is a phosphoserine (Ser280). Ser334 serves as a coordination point for (6R)-L-erythro-5,6,7,8-tetrahydrobiopterin. Cys415 provides a ligand contact to heme b. Gln478, Trp587, Tyr588, and Glu592 together coordinate L-arginine. 3 residues coordinate (6R)-L-erythro-5,6,7,8-tetrahydrobiopterin: Val677, Trp678, and Phe691. Tyr706 contributes to the heme b binding site. The interval 725–745 is calmodulin-binding; sequence KRRAIGFKKLAEAVKFSAKLM. Residues 755 to 935 form the Flavodoxin-like domain; that stretch reads ATILYATETG…AFRTWAKKVF (181 aa). The FMN site is built by Thr761, Glu762, Thr763, Lys765, Ser766, Ser807, Thr808, and Gly812. Ser847, Ser857, and Ser858 each carry phosphoserine. The FMN site is built by Ser886, His891, Cys893, Glu919, and Gln923. Positions 990–1237 constitute an FAD-binding FR-type domain; that stretch reads KRVSAARLLS…VRGAPSFHLP (248 aa). Arg1010 provides a ligand contact to NADP(+). His1032, Arg1173, Tyr1174, Tyr1175, Ser1176, Thr1191, and Ala1193 together coordinate FAD. Position 1196 (Ser1196) interacts with NADP(+). 4 residues coordinate FAD: Tyr1197, Val1210, Cys1211, and Ser1212. Thr1251, Arg1284, Ser1313, Arg1314, Lys1320, Tyr1322, Gln1324, Asp1357, Thr1398, and Arg1400 together coordinate NADP(+).

It belongs to the NOS family. In terms of assembly, homodimer. Interacts with DLG4; the interaction possibly being prevented by the association between NOS1 and CAPON. Forms a ternary complex with CAPON and RASD1. Forms a ternary complex with CAPON and SYN1. Interacts with ZDHHC23. Interacts with NOSIP; which may impair its synaptic location. Interacts with HTR4. Interacts with VAC14. Interacts (via N-terminal domain) with DLG4 (via N-terminal tandem pair of PDZ domains). Interacts with SLC6A4. Forms a complex with ASL, ASS1 and SLC7A1; the complex regulates cell-autonomous L-arginine synthesis and citrulline recycling while channeling extracellular L-arginine to nitric oxide synthesis pathway. Interacts with DMD; localizes NOS1 to sarcolemma in muscle cells. Interacts with DYNLL1; inhibits the nitric oxide synthase activity. Heme b is required as a cofactor. The cofactor is FAD. FMN serves as cofactor. It depends on (6R)-L-erythro-5,6,7,8-tetrahydrobiopterin as a cofactor. In terms of processing, ubiquitinated; mediated by STUB1/CHIP in the presence of Hsp70 and Hsp40 (in vitro). As to expression, widely expressed in the nervous system: expressed in cerebrum, olfactory bulb, hippocampus, midbrain, cerebellum, pons, medulla oblongata, and spinal cord. Also found in skeletal muscle, where it is localized beneath the sarcolemma of fast twitch muscle fibers, and in spleen, heart, kidney, and liver. N-NOS-1 and N-NOS-2 are found in all parts of the nervous system. NNOS beta and gamma occur in a region-specific manner in the brain and NNOS beta expression is developmentally regulated. NNOS Mu is only found in mature skeletal and cardiac muscles.

It is found in the cell membrane. Its subcellular location is the sarcolemma. The protein resides in the cell projection. It localises to the dendritic spine. The catalysed reaction is 2 L-arginine + 3 NADPH + 4 O2 + H(+) = 2 L-citrulline + 2 nitric oxide + 3 NADP(+) + 4 H2O. Its activity is regulated as follows. Stimulated by calcium/calmodulin. Inhibited by DYNLL1 that prevents the dimerization of the protein. Inhibited by NOSIP. Produces nitric oxide (NO) which is a messenger molecule with diverse functions throughout the body. In the brain and peripheral nervous system, NO displays many properties of a neurotransmitter. Probably has nitrosylase activity and mediates cysteine S-nitrosylation of cytoplasmic target proteins such SRR. Isoform NNOS Mu may be an effector enzyme for the dystrophin complex. The polypeptide is Nitric oxide synthase 1 (Mus musculus (Mouse)).